An 83-amino-acid chain; its full sequence is Small ribosomal subunit protein uS17 (83 aa).

It belongs to the universal ribosomal protein uS17 family. Part of the 30S ribosomal subunit.

In terms of biological role, one of the primary rRNA binding proteins, it binds specifically to the 5'-end of 16S ribosomal RNA. The sequence is that of Small ribosomal subunit protein uS17 from Campylobacter curvus (strain 525.92).